We begin with the raw amino-acid sequence, 313 residues long: Iron-sulfur protein required for NADH dehydrogenase, mitochondrial (313 aa).

Residues 1-22 (MATVALLRSLRRRELHAAHISA) constitute a mitochondrion transit peptide. ATP is bound at residue 51 to 58 (GKGGVGKS).

The protein belongs to the Mrp/NBP35 ATP-binding proteins family. The cofactor is [4Fe-4S] cluster.

The protein localises to the mitochondrion matrix. Its function is as follows. Essential during early vegetative growth. Required for the assembly of the mitochondrial membrane respiratory chain NADH dehydrogenase (Complex I). Involved in mitochondrial translation activity. May deliver of one or more Fe-S clusters to complex I subunits. The chain is Iron-sulfur protein required for NADH dehydrogenase, mitochondrial from Arabidopsis thaliana (Mouse-ear cress).